We begin with the raw amino-acid sequence, 475 residues long: MEILFVASEVAPWSKTGGLGDVAGALPRALAARGHAVSVVTPRYGTIDPHAHRLRPLHRALDVRGEPTTLWVSRDRAPVYFVEHEHFFGSRRGLYGEAHDYGDNAERFAYLARAALALPGALGLRPHIVHLNDWQTGLVPFLLRREHARDAALAGARTVFTIHNLAYQGVFSKHVVPALGLPWDVFRYEAMEFHDQLNFLKAGLVFADALTTVSPTYAREIATPQGGVGLDALLRHRARDLHGILNGIDVEEWDPATDRHLPARYSAADLSGKAACKSALQRELGLPERPDVPLVAMIGRLAEQKGLDLVVAALGELLARDLQLVLLGTGRPELEEAFRRAARERPDRMAARIGFDEGLAHRMEAGADLFLMPSRFEPCGLNQMYSLRYGTIPVVRAVGGLEDTVEDFDGWSRGTGFKFRDYHPQAMLLAVRRALEAHRDRRAWRAMMLRGMALDFSWDRSAQAYEALYRSLAAP.

Position 15 (Lys-15) interacts with ADP-alpha-D-glucose.

This sequence belongs to the glycosyltransferase 1 family. Bacterial/plant glycogen synthase subfamily.

The enzyme catalyses [(1-&gt;4)-alpha-D-glucosyl](n) + ADP-alpha-D-glucose = [(1-&gt;4)-alpha-D-glucosyl](n+1) + ADP + H(+). It participates in glycan biosynthesis; glycogen biosynthesis. Functionally, synthesizes alpha-1,4-glucan chains using ADP-glucose. In Anaeromyxobacter sp. (strain Fw109-5), this protein is Glycogen synthase.